The sequence spans 421 residues: DUF724 domain-containing protein 8 (421 aa).

Polar residues-rich tracts occupy residues 149-165 and 199-213; these read TQGS…NANE and PRNQ…TLEN. Residues 149–229 are disordered; that stretch reads TQGSGDKTGD…NRKRKREENL (81 aa). The region spanning 246–420 is the DUF724 domain; that stretch reads VLPFEKKLRI…LEFLATASAP (175 aa). Positions 361–397 form a coiled coil; it reads EKVTAEKESVKAENKRKILELQRLNEEMDKEIAQSKS.

As to expression, expressed in leaves and flowers, and at lower levels in roots, stems and siliques.

The protein localises to the nucleus. Functionally, may be involved in the polar growth of plant cells via transportation of RNAs. The sequence is that of DUF724 domain-containing protein 8 from Arabidopsis thaliana (Mouse-ear cress).